The sequence spans 338 residues: S-adenosylmethionine:tRNA ribosyltransferase-isomerase (338 aa).

It belongs to the QueA family. As to quaternary structure, monomer.

The protein resides in the cytoplasm. The enzyme catalyses 7-aminomethyl-7-carbaguanosine(34) in tRNA + S-adenosyl-L-methionine = epoxyqueuosine(34) in tRNA + adenine + L-methionine + 2 H(+). It functions in the pathway tRNA modification; tRNA-queuosine biosynthesis. In terms of biological role, transfers and isomerizes the ribose moiety from AdoMet to the 7-aminomethyl group of 7-deazaguanine (preQ1-tRNA) to give epoxyqueuosine (oQ-tRNA). This Francisella tularensis subsp. mediasiatica (strain FSC147) protein is S-adenosylmethionine:tRNA ribosyltransferase-isomerase.